The primary structure comprises 666 residues: ATP synthase subunit alpha 2 (666 aa).

182 to 189 (GDRATGKT) contributes to the ATP binding site. The segment at 527 to 666 (MPAEDAAGDI…DAEAEARHKR (140 aa)) is disordered. Positions 545–590 (ARGDADRDADHGANREVSREVSPEASREVSREVSCEVSHEADRDAA) are enriched in basic and acidic residues. The segment covering 591-601 (ADAARVAGRAP) has biased composition (low complexity). The span at 623-641 (ADGDRASASRPRPDARGDA) shows a compositional bias: basic and acidic residues.

Belongs to the ATPase alpha/beta chains family. In terms of assembly, F-type ATPases have 2 components, CF(1) - the catalytic core - and CF(0) - the membrane proton channel. CF(1) has five subunits: alpha(3), beta(3), gamma(1), delta(1), epsilon(1). CF(0) has three main subunits: a(1), b(2) and c(9-12). The alpha and beta chains form an alternating ring which encloses part of the gamma chain. CF(1) is attached to CF(0) by a central stalk formed by the gamma and epsilon chains, while a peripheral stalk is formed by the delta and b chains.

It is found in the cell inner membrane. It catalyses the reaction ATP + H2O + 4 H(+)(in) = ADP + phosphate + 5 H(+)(out). In terms of biological role, produces ATP from ADP in the presence of a proton gradient across the membrane. The alpha chain is a regulatory subunit. The sequence is that of ATP synthase subunit alpha 2 from Burkholderia pseudomallei (strain 1106a).